Reading from the N-terminus, the 308-residue chain is Acetylglutamate kinase (308 aa).

Residues 67–68, Arg-89, and Asn-193 each bind substrate; that span reads GG.

Belongs to the acetylglutamate kinase family. ArgB subfamily.

The protein resides in the cytoplasm. The catalysed reaction is N-acetyl-L-glutamate + ATP = N-acetyl-L-glutamyl 5-phosphate + ADP. The protein operates within amino-acid biosynthesis; L-arginine biosynthesis; N(2)-acetyl-L-ornithine from L-glutamate: step 2/4. In terms of biological role, catalyzes the ATP-dependent phosphorylation of N-acetyl-L-glutamate. The sequence is that of Acetylglutamate kinase from Nitratidesulfovibrio vulgaris (strain DP4) (Desulfovibrio vulgaris).